Here is a 592-residue protein sequence, read N- to C-terminus: Calnexin (592 aa).

The N-terminal stretch at Met1–Ala20 is a signal peptide. At His21–Pro481 the chain is on the lumenal side. 2 residues coordinate Ca(2+): Ser74 and Asp117. Lys137 carries the N6-acetyllysine modification. Residues Cys160 and Cys194 are joined by a disulfide bond. The an alpha-D-glucoside site is built by Tyr164, Lys166, Tyr185, and Asp192. Residues Gly260–Asp345 form a disordered region. The span at Arg274 to Lys319 shows a compositional bias: basic and acidic residues. Positions Ile276–Glu409 are p domain (Extended arm). Tandem repeats lie at residues Asp278–Arg290, Asp295–Asp307, Asp314–Asp326, Asp333–Asp345, and Gly348–Pro358. 4 X approximate repeats stretches follow at residues Asp278–Asp345 and Gly348–Pro405. Over residues Trp323–Asp345 the composition is skewed to acidic residues. The interval Asp326–Lys359 is interaction with PPIB. Residues Cys360 and Cys366 are joined by a disulfide bond. 3 consecutive repeat copies span residues Gly367–Pro377, Gly381–Pro391, and Gly395–Pro405. Residue Glu425 coordinates an alpha-D-glucoside. Position 436 (Asp436) interacts with Ca(2+). The helical transmembrane segment at Trp482–Cys502 threads the bilayer. 2 S-palmitoyl cysteine lipidation sites follow: Cys502 and Cys503. The Cytoplasmic segment spans residues Cys503–Glu592. The tract at residues Cys503–Glu592 is sufficient to mediate interaction with SGIP1. Residues Ala511–Glu592 are disordered. Residues Lys525–Lys547 are compositionally biased toward acidic residues. At Ser554 the chain carries Phosphoserine. The residue at position 562 (Thr562) is a Phosphothreonine. At Ser564 the chain carries Phosphoserine; by MAPK3. Position 583 is a phosphoserine (Ser583).

This sequence belongs to the calreticulin family. In terms of assembly, interacts with MAPK3/ERK1. Interacts with KCNH2. Associates with ribosomes. Interacts with SGIP1; involved in negative regulation of endocytosis. The palmitoylated form interacts with the ribosome-translocon complex component SSR1, promoting efficient folding of glycoproteins. Interacts with SERPINA2P/SERPINA2 and with the S and Z variants of SERPINA1. Interacts with PPIB. Interacts with ZNRF4. Interacts with SMIM22. Interacts with TMX2. Interacts with TMEM35A/NACHO and CHRNA7. Interacts with reticulophagy regulators RETREG2 and RETREG3. Interacts with DNM1L; may form part of a larger protein complex at the ER-mitochondrial interface during mitochondrial fission. Interacts with ADAM7. In terms of processing, phosphorylated at Ser-564 by MAPK3/ERK1. Phosphorylation by MAPK3/ERK1 increases its association with ribosomes. Palmitoylation by DHHC6 leads to the preferential localization to the perinuclear rough ER. It mediates the association of calnexin with the ribosome-translocon complex (RTC) which is required for efficient folding of glycosylated proteins. Post-translationally, ubiquitinated, leading to proteasomal degradation. Probably ubiquitinated by ZNRF4.

Its subcellular location is the endoplasmic reticulum membrane. It is found in the mitochondrion membrane. It localises to the melanosome membrane. Calcium-binding protein that interacts with newly synthesized monoglucosylated glycoproteins in the endoplasmic reticulum. It may act in assisting protein assembly and/or in the retention within the ER of unassembled protein subunits. It seems to play a major role in the quality control apparatus of the ER by the retention of incorrectly folded proteins. Associated with partial T-cell antigen receptor complexes that escape the ER of immature thymocytes, it may function as a signaling complex regulating thymocyte maturation. Additionally it may play a role in receptor-mediated endocytosis at the synapse. This chain is Calnexin (CANX), found in Pongo abelii (Sumatran orangutan).